We begin with the raw amino-acid sequence, 200 residues long: General odorant-binding protein 70 (200 aa).

The first 29 residues, 1-29 (MRRQYSMWASTVAVIACGSALMLLHPVGA), serve as a signal peptide directing secretion. Disulfide bonds link cysteine 105/cysteine 174 and cysteine 152/cysteine 183.

The protein belongs to the PBP/GOBP family.

Its subcellular location is the secreted. In terms of biological role, present in the aqueous fluid surrounding olfactory sensory dendrites and are thought to aid in the capture and transport of hydrophobic odorants into and through this fluid. This Anopheles gambiae (African malaria mosquito) protein is General odorant-binding protein 70 (Obp70).